The sequence spans 673 residues: Probable lysophospholipase 4 (673 aa).

Residues 1-19 (MYVNYIGLFAFVQISLTLA) form the signal peptide. N-linked (GlcNAc...) asparagine glycosylation is found at asparagine 72, asparagine 125, asparagine 191, asparagine 194, asparagine 272, asparagine 301, asparagine 374, asparagine 404, asparagine 409, asparagine 481, asparagine 516, asparagine 545, and asparagine 574. Residues 74–615 (TCSNDNLLRP…QEYCWDGTLA (542 aa)) enclose the PLA2c domain. The disordered stretch occupies residues 631-653 (TTSRAPSGTTSGTASSTTSSSVA).

This sequence belongs to the lysophospholipase family.

It is found in the secreted. The enzyme catalyses a 1-acyl-sn-glycero-3-phosphocholine + H2O = sn-glycerol 3-phosphocholine + a fatty acid + H(+). Catalyzes the release of fatty acids from lysophospholipids. This is Probable lysophospholipase 4 (plb4) from Schizosaccharomyces pombe (strain 972 / ATCC 24843) (Fission yeast).